Reading from the N-terminus, the 240-residue chain is Ribose-5-phosphate isomerase (240 aa).

Substrate contacts are provided by residues Ser34–Thr37, Asp88–Asp91, and Lys101–Gly104. The active-site Proton acceptor is the Glu110. Lys128 is a binding site for substrate.

The protein belongs to the ribose 5-phosphate isomerase family.

It localises to the cytoplasm. The enzyme catalyses aldehydo-D-ribose 5-phosphate = D-ribulose 5-phosphate. It participates in carbohydrate degradation; pentose phosphate pathway; D-ribose 5-phosphate from D-ribulose 5-phosphate (non-oxidative stage): step 1/1. In terms of biological role, involved in the first step of the non-oxidative branch of the pentose phosphate pathway. It catalyzes the reversible conversion of ribose-5-phosphate to ribulose 5-phosphate. The chain is Ribose-5-phosphate isomerase (RKI1) from Candida albicans (strain SC5314 / ATCC MYA-2876) (Yeast).